Consider the following 1007-residue polypeptide: Serine/threonine-protein kinase PRP4 homolog (1007 aa).

Residues 1 to 10 show a composition bias toward polar residues; it reads MAAAETQSLR. The tract at residues 1–99 is disordered; sequence MAAAETQSLR…EGMSPAKRTK (99 aa). Ala-2 is modified (N-acetylalanine). Residues Ser-8, Ser-20, Ser-23, and Ser-32 each carry the phosphoserine modification. Basic residues-rich tracts occupy residues 39–59 and 67–81; these read KHSRHKKKKHKHRSKHKKHKH and KKHKHKHKHKKHKRK. The span at 82–91 shows a compositional bias: basic and acidic residues; the sequence is EVIDASDKEG. Phosphoserine occurs at positions 87 and 93. Position 99 is an N6-acetyllysine; alternate (Lys-99). A Glycyl lysine isopeptide (Lys-Gly) (interchain with G-Cter in SUMO2); alternate cross-link involves residue Lys-99. Residue Lys-111 forms a Glycyl lysine isopeptide (Lys-Gly) (interchain with G-Cter in SUMO2) linkage. Lys-117 participates in a covalent cross-link: Glycyl lysine isopeptide (Lys-Gly) (interchain with G-Cter in SUMO2); alternate. Residue Lys-117 forms a Glycyl lysine isopeptide (Lys-Gly) (interchain with G-Cter in SUMO1); alternate linkage. Ser-131 is subject to Phosphoserine. Phosphotyrosine is present on Tyr-140. Disordered regions lie at residues 140-533 and 559-583; these read YESG…EEED and SNMSVPSEPSSPQSSTRTRSPSPDD. Phosphoserine is present on residues Ser-142, Ser-144, and Ser-166. Residues 157-168 show a composition bias toward low complexity; that stretch reads GNRSSTRSSSTK. Glycyl lysine isopeptide (Lys-Gly) (interchain with G-Cter in SUMO2) cross-links involve residues Lys-170 and Lys-177. 2 stretches are compositionally biased toward basic residues: residues 179-202 and 214-230; these read TTKKRSKSRSKERTRHRSDKKKSK and RSKSKERKKSKSPSKRS. 7 positions are modified to phosphoserine: Ser-239, Ser-241, Ser-257, Ser-277, Ser-283, Ser-292, and Ser-294. Basic and acidic residues predominate over residues 247 to 270; sequence RSQEKIGKARSPTDDKVKIEDKSK. Basic residues predominate over residues 302-315; sequence SKDRRSRSKERKSK. The segment covering 316 to 325 has biased composition (basic and acidic residues); it reads RSETDKEKKP. A phosphoserine mark is found at Ser-328, Ser-354, Ser-356, Ser-366, and Ser-368. Over residues 342-367 the composition is skewed to basic residues; that stretch reads PSRRPGRSPKRRSLSPKPRDKSRRSR. At Thr-385 the chain carries Phosphothreonine. At Ser-387 the chain carries Phosphoserine. Composition is skewed to basic and acidic residues over residues 395 to 408 and 415 to 429; these read RSLERKRREPERRR and RPRDDILSRRERSKD. A phosphoserine mark is found at Ser-427, Ser-431, and Ser-437. A compositionally biased stretch (basic residues) spans 438–497; sequence PTRRRSRSPIRRRSRSPLRRSRSPRRRSRSPRRRDRGRRSRSRLRRRSRSRGGRRRRSRS. Phosphoserine occurs at positions 518, 519, 520, 565, 569, 578, and 580. The segment covering 518–533 has biased composition (acidic residues); it reads SSSDDNLEDFDVEEED. A compositionally biased stretch (low complexity) spans 562–581; the sequence is SVPSEPSSPQSSTRTRSPSP. Residues Lys-593 and Lys-659 each participate in a glycyl lysine isopeptide (Lys-Gly) (interchain with G-Cter in SUMO2) cross-link. The Protein kinase domain maps to 687–1003; it reads YNVYGYTGQG…INQALQHAFI (317 aa). Residues 693–701 and Lys-717 each bind ATP; that span reads TGQGVFSNV. N6-acetyllysine is present on Lys-717. Asp-815 serves as the catalytic Proton acceptor. At Tyr-849 the chain carries Phosphotyrosine. Phosphoserine is present on Ser-852.

It belongs to the protein kinase superfamily. CMGC Ser/Thr protein kinase family. As to quaternary structure, interacts with CLK1 C-terminus. Associates with the U5 snRNP and NCOR1 deacetylase complexes. Identified in the spliceosome C complex. In terms of processing, phosphorylated by CLK1. Autophosphorylated; phosphorylation inhibits interaction with its targets, such as PRPF6 or SMARCA4.

Its subcellular location is the nucleus. The protein localises to the chromosome. It localises to the centromere. It is found in the kinetochore. It carries out the reaction L-seryl-[protein] + ATP = O-phospho-L-seryl-[protein] + ADP + H(+). It catalyses the reaction L-threonyl-[protein] + ATP = O-phospho-L-threonyl-[protein] + ADP + H(+). Serine/threonine kinase involved in spliceosomal assembly as well as mitosis and signaling regulation. Connects chromatin mediated regulation of transcription and pre-mRNA splicing. During spliceosomal assembly, interacts with and phosphorylates PRPF6 and PRPF31, components of the U4/U6-U5 tri-small nuclear ribonucleoprotein (snRNP), to facilitate the formation of the spliceosome B complex. Plays a role in regulating transcription and the spindle assembly checkpoint (SAC). Associates with U5 snRNP and NCOR1 deacetylase complexes which may allow a coordination of pre-mRNA splicing with chromatin remodeling events involved in transcriptional regulation. Associates and probably phosphorylates SMARCA4 and NCOR1. Phosphorylates SRSF1. Associates with kinetochores during mitosis and is necessary for recruitment and maintenance of the checkpoint proteins such as MAD1L1 and MAD12L1 at the kinetochores. Phosphorylates and regulates the activity of the transcription factors such as ELK1 and KLF13. Phosphorylates nuclear YAP1 and WWTR1/TAZ which induces nuclear exclusion and regulates Hippo signaling pathway, involved in tissue growth control. The polypeptide is Serine/threonine-protein kinase PRP4 homolog (PRP4K) (Pongo abelii (Sumatran orangutan)).